We begin with the raw amino-acid sequence, 564 residues long: Arginine--tRNA ligase (564 aa).

The 'HIGH' region motif lies at 136–146; that stretch reads ANPTGPLHMGN.

This sequence belongs to the class-I aminoacyl-tRNA synthetase family. Monomer.

It localises to the cytoplasm. It catalyses the reaction tRNA(Arg) + L-arginine + ATP = L-arginyl-tRNA(Arg) + AMP + diphosphate. This Ruminiclostridium cellulolyticum (strain ATCC 35319 / DSM 5812 / JCM 6584 / H10) (Clostridium cellulolyticum) protein is Arginine--tRNA ligase.